A 670-amino-acid chain; its full sequence is UvrABC system protein B (670 aa).

Positions 26–183 (EGLEDGLAHQ…RRLAELQYAR (158 aa)) constitute a Helicase ATP-binding domain. Position 39–46 (39–46 (GVTGSGKT)) interacts with ATP. A Beta-hairpin motif is present at residues 92–115 (YYDYYQPEAYVPSSDTFIEKDAAV). Residues 431–597 (QVDDLLSEIR…GLNKKVSDVL (167 aa)) form the Helicase C-terminal domain. The UVR domain maps to 630–665 (DQKIRELEAQMYTHAQNLEFELAAGLRDEIHQLREQ).

Belongs to the UvrB family. In terms of assembly, forms a heterotetramer with UvrA during the search for lesions. Interacts with UvrC in an incision complex.

The protein localises to the cytoplasm. Functionally, the UvrABC repair system catalyzes the recognition and processing of DNA lesions. A damage recognition complex composed of 2 UvrA and 2 UvrB subunits scans DNA for abnormalities. Upon binding of the UvrA(2)B(2) complex to a putative damaged site, the DNA wraps around one UvrB monomer. DNA wrap is dependent on ATP binding by UvrB and probably causes local melting of the DNA helix, facilitating insertion of UvrB beta-hairpin between the DNA strands. Then UvrB probes one DNA strand for the presence of a lesion. If a lesion is found the UvrA subunits dissociate and the UvrB-DNA preincision complex is formed. This complex is subsequently bound by UvrC and the second UvrB is released. If no lesion is found, the DNA wraps around the other UvrB subunit that will check the other stand for damage. In Serratia proteamaculans (strain 568), this protein is UvrABC system protein B.